Reading from the N-terminus, the 238-residue chain is Small ribosomal subunit protein uS2 (238 aa).

The protein belongs to the universal ribosomal protein uS2 family.

The protein is Small ribosomal subunit protein uS2 of Actinobacillus pleuropneumoniae serotype 5b (strain L20).